Here is a 192-residue protein sequence, read N- to C-terminus: Potassium-transporting ATPase KdpC subunit (192 aa).

A helical transmembrane segment spans residues 7–27 (PLIVLFVVLAALTGLAYPAVM).

Belongs to the KdpC family. As to quaternary structure, the system is composed of three essential subunits: KdpA, KdpB and KdpC.

The protein localises to the cell inner membrane. In terms of biological role, part of the high-affinity ATP-driven potassium transport (or Kdp) system, which catalyzes the hydrolysis of ATP coupled with the electrogenic transport of potassium into the cytoplasm. This subunit acts as a catalytic chaperone that increases the ATP-binding affinity of the ATP-hydrolyzing subunit KdpB by the formation of a transient KdpB/KdpC/ATP ternary complex. The protein is Potassium-transporting ATPase KdpC subunit of Paraburkholderia xenovorans (strain LB400).